The sequence spans 910 residues: Eukaryotic translation initiation factor 3 subunit C (910 aa).

The tract at residues 1–21 (MSRFFANGSESESESSEEEIQ) is disordered. A compositionally biased stretch (acidic residues) spans 11–20 (SESESSEEEI). Residues Ser-34, Ser-165, Ser-176, and Ser-185 each carry the phosphoserine modification. Residues 157 to 279 (FREAPDQESE…IRKRAEDDED (123 aa)) are disordered. The segment covering 162 to 186 (DQESEAEDEVVALESDGGDAGDDSD) has biased composition (acidic residues). The segment covering 194-207 (AVPKAVKSAPAKAA) has biased composition (low complexity). The segment covering 209–235 (ADDDDSDDSIDWDSDSESETESSDDEN) has biased composition (acidic residues). Over residues 240–268 (MRERFLKRTTEKEEKDDDKRKDKRKEQKT) the composition is skewed to basic and acidic residues. A PCI domain is found at 639-815 (FHMHINLELL…ETVGMHRSEP (177 aa)). Residues 847-910 (FFQRGNMGNR…QQQVQTIDEE (64 aa)) are disordered. Over residues 862-874 (NRNQNNQGGNWLG) the composition is skewed to low complexity. Residues 882–891 (RNRNQRGHHK) are compositionally biased toward basic residues. Residues 895–910 (DRQQQQQQQVQTIDEE) show a composition bias toward low complexity.

This sequence belongs to the eIF-3 subunit C family. In terms of assembly, component of the eukaryotic translation initiation factor 3 (eIF-3) complex. The eIF-3 complex interacts with pix.

It is found in the cytoplasm. Component of the eukaryotic translation initiation factor 3 (eIF-3) complex, which is involved in protein synthesis of a specialized repertoire of mRNAs and, together with other initiation factors, stimulates binding of mRNA and methionyl-tRNAi to the 40S ribosome. The eIF-3 complex specifically targets and initiates translation of a subset of mRNAs involved in cell proliferation. This chain is Eukaryotic translation initiation factor 3 subunit C, found in Drosophila melanogaster (Fruit fly).